The primary structure comprises 188 residues: Thymidine kinase (188 aa).

An ATP-binding site is contributed by 17–24; it reads GPMFAGKT. E92 functions as the Proton acceptor in the catalytic mechanism. F121 contributes to the substrate binding site. Zn(2+) is bound by residues C146 and C149. 166-170 provides a ligand contact to substrate; sequence LILAG. Zn(2+) contacts are provided by C179 and C182.

It belongs to the thymidine kinase family.

The enzyme catalyses thymidine + ATP = dTMP + ADP + H(+). Functionally, phosphorylates thymidine. ASFV replicates in the cytoplasm of infected cells and contains genes encoding a number of enzymes needed for DNA synthesis, including thymidine kinase. Important for growth in swine macrophages in vitro and is a virus virulence factor in swine. The protein is Thymidine kinase of Ornithodoros (relapsing fever ticks).